The sequence spans 273 residues: Epithelial sodium channel subunit beta (273 aa).

Over 1–245 the chain is Extracellular; the sequence is NCYIFNWGQE…RSISESPTTN (245 aa). 5 disulfides stabilise this stretch: Cys92–Cys179, Cys117–Cys175, Cys121–Cys171, Cys130–Cys157, and Cys132–Cys146. A helical membrane pass occupies residues 246 to 273; sequence VVWLLSNLGGQFGFWMGGSVLCIIEFGE.

It belongs to the amiloride-sensitive sodium channel (TC 1.A.6) family. SCNN1B subfamily. In terms of assembly, component of the heterotrimeric epithelial sodium channel (ENaC) composed of an alpha/SCNN1A, a beta/SCNN1B and a gamma/SCNN1G subunit.

The protein resides in the apical cell membrane. The protein localises to the cytoplasmic vesicle membrane. It catalyses the reaction Na(+)(in) = Na(+)(out). With respect to regulation, originally identified and characterized by its inhibition by the diuretic drug amiloride. Functionally, this is one of the three pore-forming subunits of the heterotrimeric epithelial sodium channel (ENaC), a critical regulator of sodium balance and fluid homeostasis. ENaC operates in epithelial tissues, where it mediates the electrodiffusion of sodium ions from extracellular fluid through the apical membrane of cells, with water following osmotically. It plays a key role in maintaining sodium homeostasis through electrogenic sodium reabsorption in the kidneys. Additionally, ENaC is essential for airway surface liquid homeostasis, which is crucial for proper mucus clearance. The sequence is that of Epithelial sodium channel subunit beta from Aquarana catesbeiana (American bullfrog).